The following is a 794-amino-acid chain: Phospholipase A-2-activating protein (794 aa).

7 WD repeats span residues 17–56 (HELD…RGFT), 63–107 (GHSN…PLYI), 110–148 (GHKD…MTLQ), 149–188 (GHTA…RTFL), 190–227 (HEDC…LEVY), 229–268 (GHTN…QTIR), and 270–307 (PAQS…TASA). Phosphoserine is present on Ser-50. Residues 366-465 (QWSVSDGRWI…KGQTLGLGNT (100 aa)) enclose the PFU domain. N6-acetyllysine is present on Lys-529. The PUL domain maps to 533–793 (IYFPKKEALT…SECCRLVLHL (261 aa)). 6 ARM repeats span residues 546–588 (ANPT…NNSS), 589–620 (EKPT…LRLS), 621–668 (IKHP…CFVS), 669–714 (QAGQ…CFHK), 715–754 (DHNI…LISD), and 755–794 (DSNA…LHLL).

Belongs to the WD repeat PLAP family. Interacts with ubiquitin. Interacts with UBXN6, VCP and YOD1; may form a complex involved in macroautophagy. Expressed in the brain, with highest levels in hippocampal neurons, cerebellar granular cell layer and Purkinje cells.

The protein localises to the nucleus. The protein resides in the cytoplasm. It is found in the synapse. Its function is as follows. Plays a role in protein ubiquitination, sorting and degradation through its association with VCP. Involved in ubiquitin-mediated membrane proteins trafficking to late endosomes in an ESCRT-dependent manner, and hence plays a role in synaptic vesicle recycling. May play a role in macroautophagy, regulating for instance the clearance of damaged lysosomes. Plays a role in cerebellar Purkinje cell development. Positively regulates cytosolic and calcium-independent phospholipase A2 activities in a tumor necrosis factor alpha (TNF-alpha)- or lipopolysaccharide (LPS)-dependent manner, and hence prostaglandin E2 biosynthesis. The sequence is that of Phospholipase A-2-activating protein (Plaa) from Mus musculus (Mouse).